The sequence spans 316 residues: Petrobactin import system permease protein YclN (316 aa).

The next 8 helical transmembrane spans lie at 5–25 (YLFILLIILAVTSVFIGVEDL), 49–69 (LISIVIAGLSMSICGLIMQQI), 94–114 (LLLFTSASPLIKMLVAFVFAL), 133–153 (IFIPLVGLMLGNIVSSIATFI), 181–201 (LLYLSIPLVIIAYVYADKFTL), 224–244 (LIIVSLITSLVILTVGMLPFL), 268–288 (VLLGAVFVLFCDILGRIIIFP), and 290–310 (EISIGLMVGIIGSGIFLFMLL).

The protein belongs to the binding-protein-dependent transport system permease family. FecCD subfamily. In terms of assembly, the complex is composed of two ATP-binding proteins (YclP), two transmembrane proteins (YclN and YclO) and a solute-binding protein (YclQ).

It is found in the cell membrane. Its function is as follows. Part of the ABC transporter complex YclNOPQ involved in uptake of ferric-petrobactin. Petrobactin is a photoreactive 3,4-catecholate siderophore produced by many members of the B.cereus group, including B.anthracis. Probably responsible for the translocation of the substrate across the membrane. The protein is Petrobactin import system permease protein YclN (yclN) of Bacillus subtilis (strain 168).